Consider the following 492-residue polypeptide: NADPH:adrenodoxin oxidoreductase, mitochondrial (492 aa).

The N-terminal 32 residues, 1–32, are a transit peptide targeting the mitochondrion; the sequence is MAPRCWRWWPWSSWTRTRLPPSRSIQNFGQHF. Residues A49, E70, L78, and V114 each contribute to the FAD site. Residues 185–188, 229–230, and E241 each bind NADP(+); these read QGNV and RR. Residues S311 and S318 each carry the phosphoserine modification. FAD-binding positions include W399 and 406-408; that span reads GVI. G406 provides a ligand contact to NADP(+).

It belongs to the ferredoxin--NADP reductase type 1 family. In terms of assembly, monomer. Interacts directly with FDX1. FAD serves as cofactor. In terms of tissue distribution, detected in adrenal cortex and corpus luteum (at protein level).

The protein resides in the mitochondrion inner membrane. It carries out the reaction 2 reduced [adrenodoxin] + NADP(+) + H(+) = 2 oxidized [adrenodoxin] + NADPH. The catalysed reaction is 2 reduced [2Fe-2S]-[ferredoxin] + NADP(+) + H(+) = 2 oxidized [2Fe-2S]-[ferredoxin] + NADPH. Its pathway is steroid metabolism; cholesterol metabolism. Its function is as follows. Serves as the first electron transfer protein in all the mitochondrial P450 systems including cholesterol side chain cleavage in all steroidogenic tissues, steroid 11-beta hydroxylation in the adrenal cortex, 25-OH-vitamin D3-24 hydroxylation in the kidney, and sterol C-27 hydroxylation in the liver. Also acts as a ferredoxin--NADP(+) reductase essential for coenzyme Q biosynthesis: together with FDX2, transfers the electrons required for the hydroxylation reaction performed by COQ6. The chain is NADPH:adrenodoxin oxidoreductase, mitochondrial (FDXR) from Bos taurus (Bovine).